Here is a 336-residue protein sequence, read N- to C-terminus: Lipoyl synthase (336 aa).

Residues cysteine 81, cysteine 86, cysteine 92, cysteine 107, cysteine 111, cysteine 114, and serine 323 each contribute to the [4Fe-4S] cluster site. Residues phenylalanine 93–serine 312 form the Radical SAM core domain.

This sequence belongs to the radical SAM superfamily. Lipoyl synthase family. [4Fe-4S] cluster is required as a cofactor.

Its subcellular location is the cytoplasm. It catalyses the reaction [[Fe-S] cluster scaffold protein carrying a second [4Fe-4S](2+) cluster] + N(6)-octanoyl-L-lysyl-[protein] + 2 oxidized [2Fe-2S]-[ferredoxin] + 2 S-adenosyl-L-methionine + 4 H(+) = [[Fe-S] cluster scaffold protein] + N(6)-[(R)-dihydrolipoyl]-L-lysyl-[protein] + 4 Fe(3+) + 2 hydrogen sulfide + 2 5'-deoxyadenosine + 2 L-methionine + 2 reduced [2Fe-2S]-[ferredoxin]. It participates in protein modification; protein lipoylation via endogenous pathway; protein N(6)-(lipoyl)lysine from octanoyl-[acyl-carrier-protein]: step 2/2. Its function is as follows. Catalyzes the radical-mediated insertion of two sulfur atoms into the C-6 and C-8 positions of the octanoyl moiety bound to the lipoyl domains of lipoate-dependent enzymes, thereby converting the octanoylated domains into lipoylated derivatives. This is Lipoyl synthase from Stenotrophomonas maltophilia (strain K279a).